The following is a 940-amino-acid chain: PTS system glucose-specific EIICBA component (940 aa).

Residues 1–284 (MQIKAQDTGQ…YAPLWYTSAG (284 aa)) form the PTS EIIC type-1; first part domain. 5 helical membrane-spanning segments follow: residues 43–63 (LMIP…GDAI), 83–103 (GGDV…AITF), 112–132 (FSAF…ILPF), 175–195 (VFGG…FYAI), and 209–229 (FVPI…LMIW). Residues 285-478 (GSLQEIVNQQ…VNSFRVAVES (194 aa)) form a unknown region. Residues 479-630 (LNPAQYSQGK…FNLATPGRGG (152 aa)) enclose the PTS EIIC type-1; second part domain. Transmembrane regions (helical) follow at residues 487 to 507 (GKFP…ILAA), 515 to 535 (AASI…TEPF), 537 to 557 (FTFL…LAAV), 564 to 584 (ILGA…ILYG), and 598 to 618 (LVPI…YFLI). The 83-residue stretch at 661-743 (QIEAGILLQA…QDIIQGKVNW (83 aa)) folds into the PTS EIIB type-1 domain. The Phosphocysteine intermediate; for EIIB activity role is filled by Cys683. The PTS EIIA type-1 domain maps to 794-907 (DETFKQKLVG…NPITPFVVMK (114 aa)). Catalysis depends on His847, which acts as the Tele-phosphohistidine intermediate; for EIIA activity.

It is found in the cell membrane. It carries out the reaction N(pros)-phospho-L-histidyl-[protein] + D-glucose(out) = D-glucose 6-phosphate(in) + L-histidyl-[protein]. The phosphoenolpyruvate-dependent sugar phosphotransferase system (sugar PTS), a major carbohydrate active transport system, catalyzes the phosphorylation of incoming sugar substrates concomitantly with their translocation across the cell membrane. This system is involved in glucose transport. This chain is PTS system glucose-specific EIICBA component (ptsG), found in Mycoplasma pneumoniae (strain ATCC 29342 / M129 / Subtype 1) (Mycoplasmoides pneumoniae).